A 147-amino-acid polypeptide reads, in one-letter code: Nucleoside diphosphate kinase (147 aa).

ATP is bound by residues lysine 9, phenylalanine 57, arginine 85, threonine 91, arginine 102, and asparagine 112. Histidine 115 functions as the Pros-phosphohistidine intermediate in the catalytic mechanism.

Belongs to the NDK family. The cofactor is Mg(2+).

It localises to the cytoplasm. It catalyses the reaction a 2'-deoxyribonucleoside 5'-diphosphate + ATP = a 2'-deoxyribonucleoside 5'-triphosphate + ADP. The enzyme catalyses a ribonucleoside 5'-diphosphate + ATP = a ribonucleoside 5'-triphosphate + ADP. Functionally, major role in the synthesis of nucleoside triphosphates other than ATP. The ATP gamma phosphate is transferred to the NDP beta phosphate via a ping-pong mechanism, using a phosphorylated active-site intermediate. This is Nucleoside diphosphate kinase from Thermoplasma volcanium (strain ATCC 51530 / DSM 4299 / JCM 9571 / NBRC 15438 / GSS1).